A 338-amino-acid polypeptide reads, in one-letter code: NADPH dehydrogenase (338 aa).

Residue 23 to 26 (SPMC) coordinates FMN. Tyrosine 28 contributes to the substrate binding site. FMN contacts are provided by alanine 60 and glutamine 102. 163–166 (HGAH) lines the substrate pocket. Residues arginine 214 and 306–307 (AR) each bind FMN.

This sequence belongs to the NADH:flavin oxidoreductase/NADH oxidase family. NamA subfamily. Homotetramer. It depends on FMN as a cofactor.

The enzyme catalyses A + NADPH + H(+) = AH2 + NADP(+). Functionally, catalyzes the reduction of the double bond of an array of alpha,beta-unsaturated aldehydes and ketones. It also reduces the nitro group of nitroester and nitroaromatic compounds. It could have a role in detoxification processes. The polypeptide is NADPH dehydrogenase (Halalkalibacterium halodurans (strain ATCC BAA-125 / DSM 18197 / FERM 7344 / JCM 9153 / C-125) (Bacillus halodurans)).